Reading from the N-terminus, the 428-residue chain is Ribosome biogenesis protein WDR12 homolog (428 aa).

A ubiquitin-like (UBL) domain region spans residues 13-97 (LQVHFTTKQK…EDTIELEYVE (85 aa)). WD repeat units lie at residues 109-146 (LHDDWVSAVQAKDGWILTGTYDNTVNLWNTKGKHKLTI), 148-190 (GHVA…NTAE), 197-236 (GHERGVGCIAVNPAKTQMASGSMDTMLKIWSTELQADKGE), 259-297 (GHREFVSGVQWIDNTTIATCSWDHTIKLWDLSMGGIKTE), 299-338 (TGNKSFFDLSYSPLNGMIITASPDKNLRLYDPRSKHGNFV), 344-384 (GHSQ…APIF), and 388-426 (GHEDKVLACDWSNPKYILSGGSDNAVRVFKSRIAVDNTK).

Belongs to the WD repeat WDR12/YTM1 family.

It localises to the nucleus. The protein localises to the nucleolus. It is found in the nucleoplasm. Functionally, required for maturation of ribosomal RNAs and formation of the large ribosomal subunit. This chain is Ribosome biogenesis protein WDR12 homolog, found in Anopheles gambiae (African malaria mosquito).